The sequence spans 344 residues: GDSL esterase/lipase At1g73610 (344 aa).

The first 24 residues, 1-24 (MNCLMFFKMLLAFSFISLFYVGNA), serve as a signal peptide directing secretion. A glycan (N-linked (GlcNAc...) asparagine) is linked at N30. The active-site Nucleophile is the S42. Residues D319 and H322 contribute to the active site.

The protein belongs to the 'GDSL' lipolytic enzyme family.

It is found in the secreted. The protein is GDSL esterase/lipase At1g73610 of Arabidopsis thaliana (Mouse-ear cress).